The sequence spans 346 residues: Ribosomal RNA small subunit methyltransferase H (346 aa).

S-adenosyl-L-methionine-binding positions include 46–48 (GGY), D63, F90, D113, and Q120. Residues 270–327 (GGSAGSRHMPETHMRLPSFTPAVKGAVGPTPEEEERNPRARSAKLRAGIRTENSPLED) form a disordered region.

It belongs to the methyltransferase superfamily. RsmH family.

The protein localises to the cytoplasm. It carries out the reaction cytidine(1402) in 16S rRNA + S-adenosyl-L-methionine = N(4)-methylcytidine(1402) in 16S rRNA + S-adenosyl-L-homocysteine + H(+). Functionally, specifically methylates the N4 position of cytidine in position 1402 (C1402) of 16S rRNA. The sequence is that of Ribosomal RNA small subunit methyltransferase H from Brucella ovis (strain ATCC 25840 / 63/290 / NCTC 10512).